The following is a 214-amino-acid chain: Small ribosomal subunit protein uS3c (214 aa).

In terms of domain architecture, KH type-2 spans 39-111 (IRTYIHTISK…QLTINVLEVE (73 aa)).

Belongs to the universal ribosomal protein uS3 family. In terms of assembly, part of the 30S ribosomal subunit.

The protein resides in the plastid. Its subcellular location is the chloroplast. The chain is Small ribosomal subunit protein uS3c (rps3) from Phaeodactylum tricornutum (strain CCAP 1055/1).